The sequence spans 250 residues: MPRYLEGWIKDVVENAKRRPYVSRSREKPVLQIIPRIRAVKGAGLNPVIAEYKRKSPSGFSEDRDPISYAKSMEQGGAVAISVITENTVFGGSYEYLERIARNVKIPLLMKDFVVSENQVDTAYDLGADFVLLIVRILTERELSGLLEYVRSYGMEALVEVHDREDLDIALRSGASLIGVNSRDLFSLTIQKEMAMKLLEQIPSTVTKVAESGIESAEEIRLLREKGADAFLIGSSLMRNPDKIKEFVQG.

It belongs to the TrpC family.

The catalysed reaction is 1-(2-carboxyphenylamino)-1-deoxy-D-ribulose 5-phosphate + H(+) = (1S,2R)-1-C-(indol-3-yl)glycerol 3-phosphate + CO2 + H2O. It functions in the pathway amino-acid biosynthesis; L-tryptophan biosynthesis; L-tryptophan from chorismate: step 4/5. This is Indole-3-glycerol phosphate synthase from Metallosphaera sedula (strain ATCC 51363 / DSM 5348 / JCM 9185 / NBRC 15509 / TH2).